Consider the following 156-residue polypeptide: Small ribosomal subunit protein uS7 (156 aa).

Belongs to the universal ribosomal protein uS7 family. In terms of assembly, part of the 30S ribosomal subunit. Contacts proteins S9 and S11.

Functionally, one of the primary rRNA binding proteins, it binds directly to 16S rRNA where it nucleates assembly of the head domain of the 30S subunit. Is located at the subunit interface close to the decoding center, probably blocks exit of the E-site tRNA. This Salinispora arenicola (strain CNS-205) protein is Small ribosomal subunit protein uS7.